Reading from the N-terminus, the 468-residue chain is Peroxisome proliferator-activated receptor alpha (468 aa).

The tract at residues 1–20 (MVDTESQICPLSPFGDDDLE) is disordered. The nuclear receptor DNA-binding region spans 99–173 (NIECRICGDK…DGMSHNAIRF (75 aa)). 2 consecutive NR C4-type zinc fingers follow at residues 102-122 (CRIC…CEGC) and 139-161 (CDRS…FQKC). The NR LBD domain maps to 239–466 (FVIHDMETLC…HPLLQEIYRD (228 aa)). The required for heterodimerization with RXRA stretch occupies residues 304-433 (DQVTLLKYGV…PKLLQKMADL (130 aa)).

It belongs to the nuclear hormone receptor family. NR1 subfamily. As to quaternary structure, heterodimer; with RXRA. This heterodimerization is required for DNA binding and transactivation activity. Interacts with NCOA3 coactivator. Interacts with CITED2; the interaction stimulates its transcriptional activity. Also interacts with PPARBP in vitro. Interacts with AKAP13, LPIN1, PRDM16 and coactivator NCOA6. Interacts with ASXL1 and ASXL2. Interacts with PER2. Interacts with SIRT1; the interaction seems to be modulated by NAD(+) levels. Interacts with CRY1 and CRY2. In hepatocytes, interacts with PAQR3 and HUWE1; the interactions promote PPARA poylubiquitination and HUWE1-mediated degradation. In terms of processing, ubiquitinated by E3 ubiquitin-protein ligase HUWE1; leading to proteasomal degradation. Phosphorylated.

The protein resides in the nucleus. Its function is as follows. Ligand-activated transcription factor. Key regulator of lipid metabolism. Activated by the endogenous ligand 1-palmitoyl-2-oleoyl-sn-glycerol-3-phosphocholine (16:0/18:1-GPC). Activated by oleylethanolamide, a naturally occurring lipid that regulates satiety. Receptor for peroxisome proliferators such as hypolipidemic drugs and fatty acids. Regulates the peroxisomal beta-oxidation pathway of fatty acids. Functions as a transcription activator for the ACOX1 and P450 genes. Transactivation activity requires heterodimerization with RXRA and is antagonized by NR2C2. May be required for the propagation of clock information to metabolic pathways regulated by PER2. The protein is Peroxisome proliferator-activated receptor alpha (PPARA) of Phascolarctos cinereus (Koala).